A 409-amino-acid polypeptide reads, in one-letter code: Multifunctional CCA protein (409 aa).

The ATP site is built by glycine 8 and arginine 11. The CTP site is built by glycine 8 and arginine 11. The Mg(2+) site is built by aspartate 21 and aspartate 23. ATP is bound by residues arginine 91, arginine 137, and arginine 140. Residues arginine 91, arginine 137, and arginine 140 each coordinate CTP. The HD domain maps to 228–329 (SGLHTLSVLE…LELLQSFDVY (102 aa)).

Belongs to the tRNA nucleotidyltransferase/poly(A) polymerase family. Bacterial CCA-adding enzyme type 1 subfamily. Monomer. Can also form homodimers and oligomers. Mg(2+) is required as a cofactor. Ni(2+) serves as cofactor.

The enzyme catalyses a tRNA precursor + 2 CTP + ATP = a tRNA with a 3' CCA end + 3 diphosphate. The catalysed reaction is a tRNA with a 3' CCA end + 2 CTP + ATP = a tRNA with a 3' CCACCA end + 3 diphosphate. Catalyzes the addition and repair of the essential 3'-terminal CCA sequence in tRNAs without using a nucleic acid template. Adds these three nucleotides in the order of C, C, and A to the tRNA nucleotide-73, using CTP and ATP as substrates and producing inorganic pyrophosphate. tRNA 3'-terminal CCA addition is required both for tRNA processing and repair. Also involved in tRNA surveillance by mediating tandem CCA addition to generate a CCACCA at the 3' terminus of unstable tRNAs. While stable tRNAs receive only 3'-terminal CCA, unstable tRNAs are marked with CCACCA and rapidly degraded. The protein is Multifunctional CCA protein of Pseudomonas fluorescens (strain Pf0-1).